The chain runs to 136 residues: Large ribosomal subunit protein eL27 (136 aa).

In terms of domain architecture, KOW spans 5–40; that stretch reads MKPGKVVLVLAGRYSGRKAVIVKNIDDGTSDRPYSH. N6-acetyllysine occurs at positions 27 and 93.

The protein belongs to the eukaryotic ribosomal protein eL27 family. In terms of assembly, component of the large ribosomal subunit. Interacts with RRP1B. Component of the large ribosomal subunit. Interacts with RRP1B. Interacts with DHX33.

Its subcellular location is the cytoplasm. It localises to the cytosol. It is found in the rough endoplasmic reticulum. Functionally, component of the large ribosomal subunit. Required for proper rRNA processing and maturation of 28S and 5.8S rRNAs. The protein is Large ribosomal subunit protein eL27 (RPL27) of Canis lupus familiaris (Dog).